The sequence spans 344 residues: Short chain dehydrogenase/reductase mfmJ (344 aa).

NADP(+)-binding residues include Leu51, Lys76, Asp99, Asn126, Tyr213, and Lys217. The active-site Proton donor is Tyr213. Catalysis depends on Lys217, which acts as the Lowers pKa of active site Tyr.

This sequence belongs to the short-chain dehydrogenases/reductases (SDR) family.

Short chain dehydrogenase/reductase; part of the gene cluster that mediates the biosynthesis of the phthalide-terpenoid hybrid 11'-O-desmethylfendlerol. MfmJ seems not to be involved directly in the biosynthesis of 11'-O-desmethylfendlerol and its role has still to be determined. The biosynthesis of 11'-O-desmethylfendlerol begins with the NR-PKS mfmB that forms 3,5-dimethylorsellinic acid (DMOA), which is then transformed into the phthalide 5,7-dihydroxy-4-(hydroxymethyl)-6-methylphthalide by the cytochrome P450 monooxygenase mfmA and the hydrolase mfmC. Subsequently, the methyltransferase mfmE catalyzes 7-O-methylation to yield 5-hydroxy-4-(hydroxymethyl)-7-methoxy-6-methylphthalide, which undergoes C-3 hydroxylation by the cytochrome P450 monooxygenase mfmF. The resultant cyclopolic acid (2,5-dihydroxy-4-(hydroxymethyl)-7-methoxy-6-methylphthalide) is then farnesylated by the DMATS-type prenyltransferase mfmD to afford 5-O-farnesylcyclopolic acid. Finally, the Pyr4-family terpene cyclase mfmH cyclizes the farnesyl moiety of 5-O-farnesylcyclopolic acid into a drimane-like structure, thus completing the biosynthesis of 11'-O-desmethylfendlerol. The polypeptide is Short chain dehydrogenase/reductase mfmJ (Annulohypoxylon moriforme (Filamentous fungus)).